We begin with the raw amino-acid sequence, 892 residues long: Putative ubiquitin carboxyl-terminal hydrolase 11 (892 aa).

The region spanning 17-132 (YTPEEERRIV…GGPPVPRKLI (116 aa)) is the DUSP domain. The interval 69–89 (EPSEVTRPGPIDNHDIIDSES) is disordered. Residues 301 to 880 (GGLQNLGNTC…AAYVLFYQRV (580 aa)) form the USP domain. The Nucleophile role is filled by Cys-310. The tract at residues 636-660 (NSGNENGHVPDESSRSILSRDTETE) is disordered. The span at 643 to 657 (HVPDESSRSILSRDT) shows a compositional bias: basic and acidic residues. His-838 (proton acceptor) is an active-site residue.

It belongs to the peptidase C19 family.

The catalysed reaction is Thiol-dependent hydrolysis of ester, thioester, amide, peptide and isopeptide bonds formed by the C-terminal Gly of ubiquitin (a 76-residue protein attached to proteins as an intracellular targeting signal).. Functionally, recognizes and hydrolyzes the peptide bond at the C-terminal Gly of ubiquitin. Involved in the processing of poly-ubiquitin precursors as well as that of ubiquitinated proteins. The sequence is that of Putative ubiquitin carboxyl-terminal hydrolase 11 (UBP11) from Arabidopsis thaliana (Mouse-ear cress).